A 270-amino-acid chain; its full sequence is DNA repair protein RecO (270 aa).

A disordered region spans residues 202 to 221; sequence PELPPSTIDADTDNPSQPPS.

Belongs to the RecO family.

In terms of biological role, involved in DNA repair and RecF pathway recombination. The protein is DNA repair protein RecO of Rhodopirellula baltica (strain DSM 10527 / NCIMB 13988 / SH1).